Here is a 463-residue protein sequence, read N- to C-terminus: Dipeptidyl peptidase 1 (463 aa).

The signal sequence occupies residues 1–24 (MGPWSGSRLVALLLLVYGAGSVRG). N-linked (GlcNAc...) asparagine glycosylation is found at N29 and N53. 2 disulfides stabilise this stretch: C30/C118 and C54/C136. A propeptide spanning residues 135 to 230 (ACFTGRKTGN…TAEIQKKILH (96 aa)) is cleaved from the precursor. N144 carries an N-linked (GlcNAc...) asparagine glycan. 3 disulfide bridges follow: C255-C298, C291-C331, and C321-C337. Residue C258 is part of the active site. A glycan (N-linked (GlcNAc...) asparagine) is linked at N276. Residues F302 and Y304 each contribute to the chloride site. Residue Y347 coordinates chloride. Residues H405 and N427 contribute to the active site.

It belongs to the peptidase C1 family. Tetramer of heterotrimers consisting of exclusion domain, heavy- and light chains. Chloride is required as a cofactor.

It localises to the lysosome. It catalyses the reaction Release of an N-terminal dipeptide, Xaa-Yaa-|-Zaa-, except when Xaa is Arg or Lys, or Yaa or Zaa is Pro.. Thiol protease. Has dipeptidylpeptidase activity. Active against a broad range of dipeptide substrates composed of both polar and hydrophobic amino acids. Proline cannot occupy the P1 position and arginine cannot occupy the P2 position of the substrate. Can act as both an exopeptidase and endopeptidase. Activates serine proteases such as elastase, cathepsin G and granzymes A and B. The chain is Dipeptidyl peptidase 1 (CTSC) from Bos taurus (Bovine).